Consider the following 347-residue polypeptide: 3-isopropylmalate dehydrogenase (347 aa).

Residues R94, R104, R128, and D219 each coordinate substrate. D219, D243, and D247 together coordinate Mg(2+). Position 279-291 (279-291 (GSAPDIAGQGKAD)) interacts with NAD(+).

The protein belongs to the isocitrate and isopropylmalate dehydrogenases family. LeuB type 2 subfamily. In terms of assembly, homodimer. The cofactor is Mg(2+). Mn(2+) is required as a cofactor.

It is found in the cytoplasm. It catalyses the reaction (2R,3S)-3-isopropylmalate + NAD(+) = 4-methyl-2-oxopentanoate + CO2 + NADH. It participates in amino-acid biosynthesis; L-leucine biosynthesis; L-leucine from 3-methyl-2-oxobutanoate: step 3/4. Its function is as follows. Catalyzes the oxidation of 3-carboxy-2-hydroxy-4-methylpentanoate (3-isopropylmalate) to 3-carboxy-4-methyl-2-oxopentanoate. The product decarboxylates to 4-methyl-2 oxopentanoate. In Streptomyces coelicolor (strain ATCC BAA-471 / A3(2) / M145), this protein is 3-isopropylmalate dehydrogenase.